We begin with the raw amino-acid sequence, 389 residues long: Sterol methyltransferase-like 1 (389 aa).

The chain crosses the membrane as a helical span at residues Ile25–Leu45.

Belongs to the class I-like SAM-binding methyltransferase superfamily. Erg6/SMT family.

The protein resides in the microsome membrane. Functionally, unable to convert squalene, botryococcene, cycloartenol, zymosterol or lanosterol to mono-, di-, tri- or tetramethylated derivatives. This chain is Sterol methyltransferase-like 1 (SMT-1), found in Botryococcus braunii (Green alga).